A 205-amino-acid chain; its full sequence is Urease accessory protein UreG (205 aa).

GTP is bound at residue 14–21 (GPVGSGKT).

Belongs to the SIMIBI class G3E GTPase family. UreG subfamily. As to quaternary structure, homodimer. UreD, UreF and UreG form a complex that acts as a GTP-hydrolysis-dependent molecular chaperone, activating the urease apoprotein by helping to assemble the nickel containing metallocenter of UreC. The UreE protein probably delivers the nickel.

It is found in the cytoplasm. Functionally, facilitates the functional incorporation of the urease nickel metallocenter. This process requires GTP hydrolysis, probably effectuated by UreG. In Citrobacter koseri (strain ATCC BAA-895 / CDC 4225-83 / SGSC4696), this protein is Urease accessory protein UreG.